We begin with the raw amino-acid sequence, 447 residues long: Argininosuccinate synthase (447 aa).

ATP is bound by residues 20–28 (AFSGGLDTS) and A46. Y102 is a binding site for L-citrulline. ATP-binding residues include G132 and T134. 3 residues coordinate L-aspartate: T134, N138, and D139. L-citrulline is bound at residue N138. Residue D139 participates in ATP binding. L-citrulline is bound by residues R142 and S195. D197 is an ATP binding site. 3 residues coordinate L-citrulline: T204, E206, and E283.

The protein belongs to the argininosuccinate synthase family. Type 2 subfamily. In terms of assembly, homotetramer.

The protein resides in the cytoplasm. It catalyses the reaction L-citrulline + L-aspartate + ATP = 2-(N(omega)-L-arginino)succinate + AMP + diphosphate + H(+). The protein operates within amino-acid biosynthesis; L-arginine biosynthesis; L-arginine from L-ornithine and carbamoyl phosphate: step 2/3. In Neisseria gonorrhoeae (strain ATCC 700825 / FA 1090), this protein is Argininosuccinate synthase.